The sequence spans 1209 residues: Sterol 3-beta-glucosyltransferase (1209 aa).

Positions 167–217 (ERLIKKFLPNDDEKYIEEYPCWLLRDIMIQGHAYLTNKHLFFFAFIPNFES) constitute a GRAM 1 domain. The 98-residue stretch at 218–315 (DFNVTGSLRL…WVSSIKKQMF (98 aa)) folds into the PH domain. The region spanning 568–634 (VRFRQHFSFD…EDVENCYKET (67 aa)) is the GRAM 2 domain. Residues Ser745, Arg746, Asp748, Asn1019, Val1048, His1050, His1063, Ser1066, Gly1067, Thr1068, Asp1087, and Gln1088 each contribute to the UDP-alpha-D-glucose site. Positions 1186–1209 (AKGNEKEEYSSEGSGSNDGSWLLI) are disordered. The span at 1196–1209 (SEGSGSNDGSWLLI) shows a compositional bias: low complexity.

Belongs to the glycosyltransferase 28 family.

Its subcellular location is the cytoplasm. It is found in the membrane. The catalysed reaction is a sterol + UDP-alpha-D-glucose = a sterol 3-beta-D-glucoside + UDP + H(+). It catalyses the reaction ergosterol + UDP-alpha-D-glucose = ergosteryl 3-beta-D-glucoside + UDP + H(+). In terms of biological role, sterol glycosyltransferase responsible for the glycosylation of ergosterol to form ergosterol-glucoside. The polypeptide is Sterol 3-beta-glucosyltransferase (Kluyveromyces lactis (strain ATCC 8585 / CBS 2359 / DSM 70799 / NBRC 1267 / NRRL Y-1140 / WM37) (Yeast)).